Here is a 343-residue protein sequence, read N- to C-terminus: N-acetyl-gamma-glutamyl-phosphate reductase (343 aa).

Residue Cys150 is part of the active site.

Belongs to the NAGSA dehydrogenase family. Type 1 subfamily.

The protein resides in the cytoplasm. It catalyses the reaction N-acetyl-L-glutamate 5-semialdehyde + phosphate + NADP(+) = N-acetyl-L-glutamyl 5-phosphate + NADPH + H(+). Its pathway is amino-acid biosynthesis; L-arginine biosynthesis; N(2)-acetyl-L-ornithine from L-glutamate: step 3/4. Functionally, catalyzes the NADPH-dependent reduction of N-acetyl-5-glutamyl phosphate to yield N-acetyl-L-glutamate 5-semialdehyde. This Nitrosococcus oceani (strain ATCC 19707 / BCRC 17464 / JCM 30415 / NCIMB 11848 / C-107) protein is N-acetyl-gamma-glutamyl-phosphate reductase.